We begin with the raw amino-acid sequence, 121 residues long: Apoptin (121 aa).

Disordered regions lie at residues 1 to 28 and 57 to 95; these read MNAH…LETP and LRSA…PSEY. Polar residues predominate over residues 58-70; that stretch reads RSATADNSENTGF.

The protein belongs to the gyrovirus apoptin family.

It is found in the host nucleus. May act as transcriptional regulator. Induces apoptosis in infected cells. Element of infectious replication cycle. The sequence is that of Apoptin (VP3) from Gallus gallus (Chicken).